A 170-amino-acid polypeptide reads, in one-letter code: Probable chemoreceptor glutamine deamidase CheD 3 (170 aa).

The protein belongs to the CheD family.

The catalysed reaction is L-glutaminyl-[protein] + H2O = L-glutamyl-[protein] + NH4(+). Its function is as follows. Probably deamidates glutamine residues to glutamate on methyl-accepting chemotaxis receptors (MCPs), playing an important role in chemotaxis. The polypeptide is Probable chemoreceptor glutamine deamidase CheD 3 (Dechloromonas aromatica (strain RCB)).